The following is a 693-amino-acid chain: Pentatricopeptide repeat-containing protein At2g19280 (693 aa).

PPR repeat units follow at residues 200–234 (LETV…GIFP), 235–269 (SRGV…GRHL), 270–304 (NAAV…GIRP), 305–339 (DIVA…GISQ), 340–370 (DSVS…FRLR), 372–406 (NIFV…GLLP), 407–441 (DCVC…GNPP), 442–476 (SLTT…GLKL), 477–511 (DVVT…GISP), 512–546 (DVAT…GFVP), 547–581 (STLA…RMKP), 582–616 (DVVT…GLKP), and 617–651 (DVVL…GMLP).

This sequence belongs to the PPR family. P subfamily.

In Arabidopsis thaliana (Mouse-ear cress), this protein is Pentatricopeptide repeat-containing protein At2g19280.